A 195-amino-acid polypeptide reads, in one-letter code: Peptidyl-tRNA hydrolase (195 aa).

A tRNA-binding site is contributed by Y14. H19 (proton acceptor) is an active-site residue. The tRNA site is built by Y64 and N66.

This sequence belongs to the PTH family. As to quaternary structure, monomer.

The protein localises to the cytoplasm. It catalyses the reaction an N-acyl-L-alpha-aminoacyl-tRNA + H2O = an N-acyl-L-amino acid + a tRNA + H(+). In terms of biological role, hydrolyzes ribosome-free peptidyl-tRNAs (with 1 or more amino acids incorporated), which drop off the ribosome during protein synthesis, or as a result of ribosome stalling. Its function is as follows. Catalyzes the release of premature peptidyl moieties from peptidyl-tRNA molecules trapped in stalled 50S ribosomal subunits, and thus maintains levels of free tRNAs and 50S ribosomes. The chain is Peptidyl-tRNA hydrolase from Desulforudis audaxviator (strain MP104C).